The primary structure comprises 179 residues: Acireductone dioxygenase (179 aa).

Fe(2+) contacts are provided by His99, His101, Glu105, and His144. 4 residues coordinate Ni(2+): His99, His101, Glu105, and His144.

This sequence belongs to the acireductone dioxygenase (ARD) family. Monomer. It depends on Fe(2+) as a cofactor. Requires Ni(2+) as cofactor.

It carries out the reaction 1,2-dihydroxy-5-(methylsulfanyl)pent-1-en-3-one + O2 = 3-(methylsulfanyl)propanoate + CO + formate + 2 H(+). It catalyses the reaction 1,2-dihydroxy-5-(methylsulfanyl)pent-1-en-3-one + O2 = 4-methylsulfanyl-2-oxobutanoate + formate + 2 H(+). The protein operates within amino-acid biosynthesis; L-methionine biosynthesis via salvage pathway; L-methionine from S-methyl-5-thio-alpha-D-ribose 1-phosphate: step 5/6. Its function is as follows. Catalyzes 2 different reactions between oxygen and the acireductone 1,2-dihydroxy-3-keto-5-methylthiopentene (DHK-MTPene) depending upon the metal bound in the active site. Fe-containing acireductone dioxygenase (Fe-ARD) produces formate and 2-keto-4-methylthiobutyrate (KMTB), the alpha-ketoacid precursor of methionine in the methionine recycle pathway. Ni-containing acireductone dioxygenase (Ni-ARD) produces methylthiopropionate, carbon monoxide and formate, and does not lie on the methionine recycle pathway. This Exiguobacterium sibiricum (strain DSM 17290 / CCUG 55495 / CIP 109462 / JCM 13490 / 255-15) protein is Acireductone dioxygenase.